The primary structure comprises 630 residues: Biosynthetic arginine decarboxylase (630 aa).

K99 carries the post-translational modification N6-(pyridoxal phosphate)lysine. Position 279 to 289 (279 to 289) interacts with substrate; the sequence is FDVGGGLGVDY.

It belongs to the Orn/Lys/Arg decarboxylase class-II family. SpeA subfamily. It depends on Mg(2+) as a cofactor. Pyridoxal 5'-phosphate serves as cofactor.

It carries out the reaction L-arginine + H(+) = agmatine + CO2. It functions in the pathway amine and polyamine biosynthesis; agmatine biosynthesis; agmatine from L-arginine: step 1/1. Catalyzes the biosynthesis of agmatine from arginine. The chain is Biosynthetic arginine decarboxylase from Neisseria meningitidis serogroup B (strain ATCC BAA-335 / MC58).